The chain runs to 354 residues: Protein RecA (354 aa).

67–74 (GPESSGKT) is an ATP binding site.

The protein belongs to the RecA family.

The protein resides in the cytoplasm. Functionally, can catalyze the hydrolysis of ATP in the presence of single-stranded DNA, the ATP-dependent uptake of single-stranded DNA by duplex DNA, and the ATP-dependent hybridization of homologous single-stranded DNAs. It interacts with LexA causing its activation and leading to its autocatalytic cleavage. In Chlamydia muridarum (strain MoPn / Nigg), this protein is Protein RecA.